The primary structure comprises 282 residues: Probable protein phosphatase 2C 10 (282 aa).

The region spanning K34–L281 is the PPM-type phosphatase domain. The Mn(2+) site is built by D71, G72, D233, and D272.

Belongs to the PP2C family. Mg(2+) serves as cofactor. It depends on Mn(2+) as a cofactor.

The catalysed reaction is O-phospho-L-seryl-[protein] + H2O = L-seryl-[protein] + phosphate. It catalyses the reaction O-phospho-L-threonyl-[protein] + H2O = L-threonyl-[protein] + phosphate. The protein is Probable protein phosphatase 2C 10 of Arabidopsis thaliana (Mouse-ear cress).